A 248-amino-acid polypeptide reads, in one-letter code: 3-deoxy-manno-octulosonate cytidylyltransferase (248 aa).

This sequence belongs to the KdsB family.

It localises to the cytoplasm. The enzyme catalyses 3-deoxy-alpha-D-manno-oct-2-ulosonate + CTP = CMP-3-deoxy-beta-D-manno-octulosonate + diphosphate. It participates in nucleotide-sugar biosynthesis; CMP-3-deoxy-D-manno-octulosonate biosynthesis; CMP-3-deoxy-D-manno-octulosonate from 3-deoxy-D-manno-octulosonate and CTP: step 1/1. The protein operates within bacterial outer membrane biogenesis; lipopolysaccharide biosynthesis. In terms of biological role, activates KDO (a required 8-carbon sugar) for incorporation into bacterial lipopolysaccharide in Gram-negative bacteria. The polypeptide is 3-deoxy-manno-octulosonate cytidylyltransferase (Salmonella agona (strain SL483)).